We begin with the raw amino-acid sequence, 748 residues long: Rho GTPase-activating protein 24 (748 aa).

Positions 18 to 124 constitute a PH domain; sequence NATKCGWLRK…WVKSIRRVIW (107 aa). The 195-residue stretch at 134 to 328 folds into the Rho-GAP domain; it reads QKLEDTVRYE…VMISKHDRLF (195 aa). The tract at residues 328-476 is disordered; the sequence is FPKDTEPQSK…SSGTKMGTHS (149 aa). 2 stretches are compositionally biased toward polar residues: residues 335–347 and 356–368; these read QSKP…SNNN and GQLQ…NTKE. Phosphoserine is present on residues serine 369, serine 391, serine 396, serine 398, serine 402, serine 413, serine 415, and serine 437. The span at 369 to 381 shows a compositional bias: basic and acidic residues; that stretch reads SPVRRCSWDKPES. Over residues 382–405 the composition is skewed to polar residues; sequence PQRSSMDNGSPTALSGSKTNSPRN. The span at 432 to 476 shows a compositional bias: polar residues; sequence IVTNGSFSSSNAEGVEKTQTTPNGSLQARRTSSLKSSGTKMGTHS. Threonine 452 is subject to Phosphothreonine. Serine 495 is modified (phosphoserine). Residues 582–640 are disordered; it reads DFYGGNFEDPVLDGPPQDDLSHPGDYENKSDRRSVGGRSSRATSSSDNSETFVGNTSSN. Positions 600–615 are enriched in basic and acidic residues; it reads DLSHPGDYENKSDRRS. Over residues 617-630 the composition is skewed to low complexity; the sequence is GGRSSRATSSSDNS. The span at 631–640 shows a compositional bias: polar residues; sequence ETFVGNTSSN. A coiled-coil region spans residues 649–729; sequence SSLKQEMTKQ…KEMEQFFSTF (81 aa).

As to quaternary structure, interacts with FLNA. Post-translationally, phosphorylated by ROCK, leading to activate the RacGAP activity.

The protein resides in the cytoplasm. The protein localises to the cytoskeleton. It localises to the cell junction. Its subcellular location is the adherens junction. It is found in the focal adhesion. The protein resides in the cell projection. In terms of biological role, rho GTPase-activating protein involved in cell polarity, cell morphology and cytoskeletal organization. Acts as a GTPase activator for the Rac-type GTPase by converting it to an inactive GDP-bound state. Controls actin remodeling by inactivating Rac downstream of Rho leading to suppress leading edge protrusion and promotes cell retraction to achieve cellular polarity. Able to suppress RAC1 and CDC42 activity in vitro. Overexpression induces cell rounding with partial or complete disruption of actin stress fibers and formation of membrane ruffles, lamellipodia, and filopodia. Isoform 2 is a vascular cell-specific GAP involved in modulation of angiogenesis. The chain is Rho GTPase-activating protein 24 (Arhgap24) from Rattus norvegicus (Rat).